We begin with the raw amino-acid sequence, 1135 residues long: MIMWGLLLTMILIDFGASLRNVYDMKIECPHSINFGESSVTGKVELPPLLLTDAEALVPESSCNMDNHQSMSIIQKVTKVSWRKKADKAQAAKDSFETTSSEVNLKGTCALSHRMVEESYRNRRSVICYDLSCNSTHCKPTMHMIVPVHSCNMMKSCLVGLGPYRIQIVYERTYCTTGILTEGKCFVPDQSIVNVIKNGVFDIASVSIVCFFIRVKGTNYKIMASIKTATANNCNDTDNKVQGYYLCIVGGNSSPVYAPSTTDFRSMEALASLLRAPHGEDHDLSGEEVATYSIAGQIEGKIPHTANAANMLFTAFSGIPSYSSLSVFIGSQDGPVIYSPGLFPRLNQSSCDKIALPLIWEGYIDLPGYYETVHPCNVFCVLSGPGASCEAFSEGGIFNITSPTCLVSKQNRFRAAEQQVNFVCQRVDQDIVIYCNGQKKTILTKTLVIGQCIYSVTSLFSIMPGVAHSIAIELCVPGFHGWATAALLTTFCFGWILILSITLAVLVVLKFFAAILHNSSQENRFKIILRKIKEEFEKTKGSMVCEVCKYECETGKELKAHNLSCPQSQCPYCFTHCEPTESAFQAHYKVCQATHRFRDDLKKTITPQSTSPGCYRTLNLFRYKSRCYIFTVWVTLLIIESIMWAASASETVLEPSWNDNAHGVGVVPMHTDLELDFSLPSSSKYTYKRKLTSPLNQEQSVDLHIEIESQGISTSVHALGHWFDGRLNLKTSFHCYGACTKYEYPWHTAKCHFERDFEYENNWGCNPADCPGIGTGCTACGLYIDQLKPVGSAYKLITVRYSRKVCVQFGEENLCKTIDMNDCFVTRHVKVCIIGTVSKFSQGDTLVFLGPMEGGGLIFKDWCTSTCQFGDPGDIMSPKDKGFSCPDFTGHFRKKCNFATTPVCEYDGNMVSGYKKVMATIDSFQSFNTSSIHYTDERIEWKDPDGMLKDHLNILVTKDIDFENLGENPCKVGLQTSSIEGAWGSGVGFTLTCQISLTECSRFLTSIKACDMAICYGAQSVTLIRGQNTVKVSGKGGHSGSSFKCCHGTDCSQQGLQASAPHLDKVNGIVEQESEKVYDDGAPQCGISCWFVKSGEWITGIFNGNWIVIVVLVFFFILSLILLSLLCPIRKHKRS.

The signal sequence occupies residues 1-18 (MIMWGLLLTMILIDFGAS). The Lumenal segment spans residues 19 to 495 (LRNVYDMKIE…ALLTTFCFGW (477 aa)). Disulfide bonds link cysteine 29-cysteine 151, cysteine 63-cysteine 157, cysteine 109-cysteine 128, cysteine 133-cysteine 138, cysteine 175-cysteine 185, cysteine 210-cysteine 247, cysteine 234-cysteine 351, cysteine 376-cysteine 435, cysteine 380-cysteine 389, cysteine 405-cysteine 424, and cysteine 452-cysteine 475. N-linked (GlcNAc...) asparagine; by host glycosylation is present at asparagine 134. Residues asparagine 235 and asparagine 347 are each glycosylated (N-linked (GlcNAc...) asparagine; by host). An N-linked (GlcNAc...) asparagine; by host glycan is attached at asparagine 399. Residues 496-516 (ILILSITLAVLVVLKFFAAIL) form a helical membrane-spanning segment. The binding to the ribonucleoprotein stretch occupies residues 516 to 533 (LHNSSQENRFKIILRKIK). Residues 517 to 627 (HNSSQENRFK…LNLFRYKSRC (111 aa)) lie on the Cytoplasmic side of the membrane. CCHC-type zinc fingers lie at residues 545–565 (CEVC…NLSC) and 570–591 (CPYC…YKVC). 3 binding to the ribonucleoprotein regions span residues 588–605 (YKVC…KKTI), 592–603 (QATHRFRDDLKK), and 611–625 (SPGC…RYKS). Residues 611–634 (SPGCYRTLNLFRYKSRCYIFTVWV) form the ITAM domain. Phosphotyrosine is present on residues tyrosine 615 and tyrosine 628. The YxxL signature appears at 615 to 618 (YRTL). The helical transmembrane segment at 628–648 (YIFTVWVTLLIIESIMWAASA) threads the bilayer. Residues 649–1105 (SETVLEPSWN…EWITGIFNGN (457 aa)) lie on the Lumenal side of the membrane. Cystine bridges form between cysteine 735–cysteine 770, cysteine 739–cysteine 777, cysteine 751–cysteine 885, cysteine 765–cysteine 896, cysteine 780–cysteine 904, cysteine 806–cysteine 815, cysteine 823–cysteine 832, and cysteine 863–cysteine 867. The tract at residues 757-777 (FEYENNWGCNPADCPGIGTGC) is fusion loop. Asparagine 928 carries an N-linked (GlcNAc...) asparagine; by host glycan. 5 disulfides stabilise this stretch: cysteine 970/cysteine 1000, cysteine 993/cysteine 1045, cysteine 1010/cysteine 1015, cysteine 1046/cysteine 1051, and cysteine 1085/cysteine 1089. A helical transmembrane segment spans residues 1106 to 1126 (WIVIVVLVFFFILSLILLSLL). Residues 1122-1135 (LLSLLCPIRKHKRS) form a binding to the ribonucleoprotein region. Residues 1127–1135 (CPIRKHKRS) lie on the Cytoplasmic side of the membrane.

It belongs to the hantavirus envelope glycoprotein family. As to quaternary structure, homodimer. Homotetramer; forms heterotetrameric Gn-Gc spikes in the pre-fusion conformation. Interacts (via C-terminus) with the nucleoprotein. Interacts with host TUFM; this interaction contributes to the virus-induced degradation of mitochondria by autophagy, which leads to degradation of host MAVS and inhibition of type I interferon (IFN) responses. Interacts with host MAP1LC3B; this interaction contributes to the virus-induced degradation of mitochondria by autophagy, which leads to degradation of host MAVS and inhibition of type I interferon (IFN) responses. Homodimer. Homotetramer; forms heterotetrameric Gn-Gc spikes in the pre-fusion conformation. Homotrimer; forms homotrimer in the post-fusion conformation at acidic pH. Interacts (via C-terminus) with the nucleoprotein. Envelope polyprotein precursor is quickly cleaved in vivo just after synthesis, presumably by host signal peptidase.

It localises to the virion membrane. It is found in the host cell surface. Its subcellular location is the host Golgi apparatus membrane. The protein localises to the host endoplasmic reticulum membrane. The protein resides in the host mitochondrion. In terms of biological role, forms homotetramers with glycoprotein C at the surface of the virion. Attaches the virion to host cell receptors including integrin ITGAV/ITGB3. This attachment induces virion internalization predominantly through clathrin-dependent endocytosis. Mediates the assembly and budding of infectious virus particles through its interaction with the nucleocapsid protein and the viral genome. May dysregulate normal immune and endothelial cell responses through an ITAM motif. Translocates to mitochondria, binds to host TUFM and recruits MAP1LC3B. These interactions induce mitochondrial autophagy and therefore destruction of host MAVS leading to inhibition of type I interferon (IFN) responses. Concomitant breakdown of glycoprotein N is apparently prevented by the nucleoprotein that may inhibit Gn-stimulated autophagosome-lysosome fusion. Interacts with the viral genomic RNA. Functionally, forms homotetramers with glycoprotein N at the surface of the virion. Attaches the virion to host cell receptors including integrin ITGAV/ITGB3. This attachment induces virion internalization predominantly through clathrin-dependent endocytosis. Class II fusion protein that promotes fusion of viral membrane with host endosomal membrane after endocytosis of the virion. This is Envelopment polyprotein (GP) from Dobrava-Belgrade orthohantavirus (DOBV).